The chain runs to 335 residues: GTPase Obg (335 aa).

Residues 1-159 (MKFVDSAKIS…YELEMELKLM (159 aa)) form the Obg domain. The OBG-type G domain occupies 160 to 323 (ADVGLVGFPN…LKDELWRQVS (164 aa)). GTP is bound by residues 166–173 (GFPNAGKS), 191–195 (FTTLV), 213–216 (DIPG), 280–283 (TKMD), and 304–306 (SSV). Mg(2+) contacts are provided by Ser173 and Thr193.

The protein belongs to the TRAFAC class OBG-HflX-like GTPase superfamily. OBG GTPase family. In terms of assembly, monomer. Mg(2+) serves as cofactor.

The protein localises to the cytoplasm. Functionally, an essential GTPase which binds GTP, GDP and possibly (p)ppGpp with moderate affinity, with high nucleotide exchange rates and a fairly low GTP hydrolysis rate. Plays a role in control of the cell cycle, stress response, ribosome biogenesis and in those bacteria that undergo differentiation, in morphogenesis control. The chain is GTPase Obg from Chlorobaculum tepidum (strain ATCC 49652 / DSM 12025 / NBRC 103806 / TLS) (Chlorobium tepidum).